The chain runs to 124 residues: Urease subunit beta (124 aa).

It belongs to the urease beta subunit family. Heterotrimer of UreA (gamma), UreB (beta) and UreC (alpha) subunits. Three heterotrimers associate to form the active enzyme.

It localises to the cytoplasm. It catalyses the reaction urea + 2 H2O + H(+) = hydrogencarbonate + 2 NH4(+). It participates in nitrogen metabolism; urea degradation; CO(2) and NH(3) from urea (urease route): step 1/1. This chain is Urease subunit beta, found in Halalkalibacterium halodurans (strain ATCC BAA-125 / DSM 18197 / FERM 7344 / JCM 9153 / C-125) (Bacillus halodurans).